Here is a 1209-residue protein sequence, read N- to C-terminus: Pre-mRNA-splicing factor rse1 (1209 aa).

This sequence belongs to the RSE1 family. As to quaternary structure, associated with the spliceosome.

The protein resides in the nucleus. Functionally, involved in pre-mRNA splicing and cell cycle control. This Neurospora crassa (strain ATCC 24698 / 74-OR23-1A / CBS 708.71 / DSM 1257 / FGSC 987) protein is Pre-mRNA-splicing factor rse1 (msp-5).